A 295-amino-acid polypeptide reads, in one-letter code: Lectin 11 (295 aa).

The Cytoplasmic segment spans residues 1–22 (MHYSHFYFIINNTNMTINAIPK). A helical membrane pass occupies residues 23-45 (LFATKNSISLSIVIFMYLLILVA). The Extracellular portion of the chain corresponds to 46–295 (NVKSDSSFNF…ILSWSFTSNM (250 aa)). Asn-152 carries an N-linked (GlcNAc...) asparagine glycan.

The protein belongs to the leguminous lectin family.

The protein localises to the membrane. Its function is as follows. May be involved in arbuscular mycorrhizal (AM) symbiosis with AM fungi. The protein is Lectin 11 of Medicago truncatula (Barrel medic).